Here is a 452-residue protein sequence, read N- to C-terminus: MKVISNFQNKKILILGLAKSGEAAAKLLTKLGALVTVNDSKPFDQNPAAQALLEEGIKVICGSHPVELLDENFEYMVKNPGIPYDNPMVKRALAKEIPLLTEVELAYFVSEAPIIGITGSNGKTTTTTMIADVLNAGGQSALLSGNIGYPASKVVQKAIAGDTLVMELSSFQLVGVNAFRPHIAVITNLMPTHLDYHGSFEDYVAAKWMIQAQMTESDYLILNANQEISATLAKTTKATVIPFSTQKVVDGAYLNDGILYFKEQAIIAATDLGVPGSHNIENALATIAVAKLSGIADDIIAQCLSHFGGVKHRLQRVGQIKDITFYNDSKSTNILATQKALSGFDNSRLILIAGGLDRGNEFDDLVPDLLGLKQMIILGESAERMKRAANKAEVSYLEARNVAEATELAFKLAQTGDTILLSPANASWDMYPNFEVRGDEFLATFDCLRGDA.

An ATP-binding site is contributed by 119-125 (GSNGKTT).

This sequence belongs to the MurCDEF family.

The protein localises to the cytoplasm. The enzyme catalyses UDP-N-acetyl-alpha-D-muramoyl-L-alanine + D-glutamate + ATP = UDP-N-acetyl-alpha-D-muramoyl-L-alanyl-D-glutamate + ADP + phosphate + H(+). The protein operates within cell wall biogenesis; peptidoglycan biosynthesis. In terms of biological role, cell wall formation. Catalyzes the addition of glutamate to the nucleotide precursor UDP-N-acetylmuramoyl-L-alanine (UMA). The chain is UDP-N-acetylmuramoylalanine--D-glutamate ligase from Streptococcus pyogenes serotype M5 (strain Manfredo).